We begin with the raw amino-acid sequence, 32 residues long: Fibrinolytic enzyme (32 aa).

Post-translationally, the N-terminus is blocked.

Inhibited by phenylmethanesulfonyl fluoride (PMSF). Not inhibited by EDTA, EGTA, beta-mercaptoethanol, indoacetamide, benzamidine, aprotinin, pepstatin A and trypsin inhibitor. Its function is as follows. Plasmin-like serine protease. Has fibrinolytic and fibrinogenolytic but not plasminogenolytic activity. Cleaves after Arg and Lys residues. This Hediste japonica (Polychaete worm) protein is Fibrinolytic enzyme.